The following is a 660-amino-acid chain: Bifunctional polymyxin resistance protein ArnA (660 aa).

A formyltransferase ArnAFT region spans residues 1-304 (MKAIVFAYHD…DMSMVTDVRV (304 aa)). His-104 serves as the catalytic Proton donor; for formyltransferase activity. (6R)-10-formyltetrahydrofolate contacts are provided by residues Arg-114 and 136 to 140 (VLKPD). A dehydrogenase ArnADH region spans residues 314–660 (HRKRVLILGV…RGAVEELGKN (347 aa)). NAD(+) contacts are provided by residues Asp-347 and 368–369 (DI). UDP-alpha-D-glucuronate contacts are provided by residues Ala-393, Tyr-398, and 432–433 (TS). Glu-434 functions as the Proton acceptor; for decarboxylase activity in the catalytic mechanism. UDP-alpha-D-glucuronate is bound by residues Arg-460, Asn-492, 526-535 (KLVDGGEQKR), and Tyr-613. Arg-619 (proton donor; for decarboxylase activity) is an active-site residue.

This sequence in the N-terminal section; belongs to the Fmt family. UDP-L-Ara4N formyltransferase subfamily. The protein in the C-terminal section; belongs to the NAD(P)-dependent epimerase/dehydratase family. UDP-glucuronic acid decarboxylase subfamily. In terms of assembly, homohexamer, formed by a dimer of trimers.

The catalysed reaction is UDP-alpha-D-glucuronate + NAD(+) = UDP-beta-L-threo-pentopyranos-4-ulose + CO2 + NADH. The enzyme catalyses UDP-4-amino-4-deoxy-beta-L-arabinose + (6R)-10-formyltetrahydrofolate = UDP-4-deoxy-4-formamido-beta-L-arabinose + (6S)-5,6,7,8-tetrahydrofolate + H(+). It participates in nucleotide-sugar biosynthesis; UDP-4-deoxy-4-formamido-beta-L-arabinose biosynthesis; UDP-4-deoxy-4-formamido-beta-L-arabinose from UDP-alpha-D-glucuronate: step 1/3. The protein operates within nucleotide-sugar biosynthesis; UDP-4-deoxy-4-formamido-beta-L-arabinose biosynthesis; UDP-4-deoxy-4-formamido-beta-L-arabinose from UDP-alpha-D-glucuronate: step 3/3. Its pathway is bacterial outer membrane biogenesis; lipopolysaccharide biosynthesis. Bifunctional enzyme that catalyzes the oxidative decarboxylation of UDP-glucuronic acid (UDP-GlcUA) to UDP-4-keto-arabinose (UDP-Ara4O) and the addition of a formyl group to UDP-4-amino-4-deoxy-L-arabinose (UDP-L-Ara4N) to form UDP-L-4-formamido-arabinose (UDP-L-Ara4FN). The modified arabinose is attached to lipid A and is required for resistance to polymyxin and cationic antimicrobial peptides. This chain is Bifunctional polymyxin resistance protein ArnA, found in Photorhabdus laumondii subsp. laumondii (strain DSM 15139 / CIP 105565 / TT01) (Photorhabdus luminescens subsp. laumondii).